The primary structure comprises 218 residues: Ribose-5-phosphate isomerase A (218 aa).

Substrate is bound by residues 28–31 (TGST), 81–84 (DGAD), and 94–97 (KGGG). E103 functions as the Proton acceptor in the catalytic mechanism. K121 is a binding site for substrate.

It belongs to the ribose 5-phosphate isomerase family. In terms of assembly, homodimer.

It catalyses the reaction aldehydo-D-ribose 5-phosphate = D-ribulose 5-phosphate. Its pathway is carbohydrate degradation; pentose phosphate pathway; D-ribose 5-phosphate from D-ribulose 5-phosphate (non-oxidative stage): step 1/1. Its function is as follows. Catalyzes the reversible conversion of ribose-5-phosphate to ribulose 5-phosphate. In Alcanivorax borkumensis (strain ATCC 700651 / DSM 11573 / NCIMB 13689 / SK2), this protein is Ribose-5-phosphate isomerase A.